The following is a 2561-amino-acid chain: Squalestatin hexaketide synthase (2561 aa).

A disordered region spans residues 1–77 (MDVSKEEGQR…NGTTNITPEF (77 aa)). Residues 20-74 (NETTNGHTNGYTNGHTNGHTNGTTNATTNGTTNGTMNGTTNGTTNRTTNGTTNIT) show a composition bias toward low complexity. Residues 83-503 (QVPVAICGIG…GSNTHIIIDS (421 aa)) form the Ketosynthase family 3 (KS3) domain. Active-site for beta-ketoacyl synthase activity residues include cysteine 253, histidine 390, and histidine 427. Positions 603–925 (FIFTGQGAQW…LEAIGKLFCF (323 aa)) are malonyl-CoA:ACP transacylase (MAT) domain. The tract at residues 972–1101 (HELLGERSLE…GLVTASVVIS (130 aa)) is N-terminal hotdog fold. Residues 972-1253 (HELLGERSLE…RGFKCKRTDE (282 aa)) are dehydratase (DH) domain. The region spanning 972–1257 (HELLGERSLE…CKRTDESFIQ (286 aa)) is the PKS/mFAS DH domain. The active-site Proton acceptor; for dehydratase activity is the histidine 1004. A C-terminal hotdog fold region spans residues 1112-1257 (TFPRKVDTSR…CKRTDESFIQ (146 aa)). Residue aspartate 1174 is the Proton donor; for dehydratase activity of the active site. Residues 1421 to 1599 (SFFQAAGLNK…GFEGAGTVVL (179 aa)) are methyltransferase (CMet) domain. Residues 1826–2146 (GMLNTLHWVG…RGVHMGRIVV (321 aa)) form an enoyl reductase (ER) (ER) domain region. The segment at 2170 to 2343 (STYLLTGGMG…PASVIDIAAI (174 aa)) is ketoreductase (KR) domain. One can recognise a Carrier domain in the interval 2472-2550 (VLFAQEIAKR…SLGRLATKRL (79 aa)). Serine 2509 carries the post-translational modification O-(pantetheine 4'-phosphoryl)serine.

The protein operates within secondary metabolite biosynthesis. Functionally, highly reducing polyketide synthase (HR-PKS); part of the gene cluster that mediates the biosynthesis of squalestatin S1 (SQS1, also known as zaragozic acid A), a heavily oxidized fungal polyketide that offers potent cholesterol lowering activity by targeting squalene synthase (SS). SQS1 is composed of a 2,8-dioxobicyclic[3.2.1]octane-3,4,5-tricarboxyclic acid core that is connected to two lipophilic polyketide arms. These initial steps feature the priming of an unusual benzoic acid starter unit onto the highly reducing polyketide synthase pks2, followed by oxaloacetate extension and product release to generate a tricarboxylic acid containing product. The phenylalanine ammonia lyase (PAL) M7 and the acyl-CoA ligase M9 are involved in transforming phenylalanine into benzoyl-CoA. The citrate synthase-like protein R3 is involved in connecting the C-alpha-carbons of the hexaketide chain and oxaloacetate to afford the tricarboxylic acid unit. The potential hydrolytic enzymes, M8 and M10, are in close proximity to pks2 and may participate in product release. On the other side, the tetraketide arm is synthesized by a the squalestatin tetraketide synthase pks1 and enzymatically esterified to the core in the last biosynthetic step, by the acetyltransferase M4. The biosynthesis of the tetraketide must involve 3 rounds of chain extension. After the first and second rounds methyl-transfer occurs, and in all rounds of extension the ketoreductase and dehydratase are active. The enoyl reductase and C-MeT of pks1 are not active in the final round of extension. The acetyltransferase M4 appears to have a broad substrate selectivity for its acyl CoA substrate, allowing the in vitro synthesis of novel squalestatins. The biosynthesis of SQS1 requires several oxidative steps likely performed by oxidoreductases M1, R1 and R2. Finally, in support of the identification of the cluster as being responsible for SQS1 production, the cluster contains a gene encoding a putative squalene synthase (SS) R6, suggesting a likely mechanism for self-resistance. This Phoma sp. (strain ATCC 20986 / MF5453) protein is Squalestatin hexaketide synthase.